The chain runs to 124 residues: Apolipoprotein C-IV (124 aa).

The first 27 residues, 1–27, serve as a signal peptide directing secretion; that stretch reads MSLLRCRQQTLPSLCLSVLFLACFVAS.

The protein belongs to the apolipoprotein C4 family.

It is found in the secreted. In terms of biological role, may participate in lipoprotein metabolism. The chain is Apolipoprotein C-IV (Apoc4) from Rattus norvegicus (Rat).